The chain runs to 450 residues: MKVIDQFKNKKVLVLGLAKSGESAARLLDKLGAIVTVNDGKPFEDNPAAQCLLEEGIKVITGGHPLELLDEEFALMVKNPGIPYNNPMIEKALAKGIPVLTEVELAYLISEAPIIGITGSNGKTTTTTMIGEVLTAAGQHGLLSGNIGYPASQVAQIATDKNTLVMELSSFQLMGVQEFHPEIAVITNLMPTHIDYHGLFEEYVAAKWNIQNKMAAADFLVLNFNQDLAKDLASKTEATVVPFSTLEKVDGAYLEDGQLYFRGEVVMAANEIGVPGSHNVENALATIAVAKLRGVDNQTIKETLSAFGGVKHRLQFVDDIKGVKFYNDSKSTNILATQKALSGFDNSKVVLIAGGLDRGNEFDELVPDITGLKKMVILGQSAERVKRAADKAGVAYVEATDIADATRKAYELATQGDVVLLSPANASWDMYANFEVRGDLFIDTVAELKE.

119–125 (GSNGKTT) lines the ATP pocket.

This sequence belongs to the MurCDEF family.

The protein localises to the cytoplasm. The catalysed reaction is UDP-N-acetyl-alpha-D-muramoyl-L-alanine + D-glutamate + ATP = UDP-N-acetyl-alpha-D-muramoyl-L-alanyl-D-glutamate + ADP + phosphate + H(+). It participates in cell wall biogenesis; peptidoglycan biosynthesis. Cell wall formation. Catalyzes the addition of glutamate to the nucleotide precursor UDP-N-acetylmuramoyl-L-alanine (UMA). The protein is UDP-N-acetylmuramoylalanine--D-glutamate ligase of Streptococcus pneumoniae (strain Taiwan19F-14).